We begin with the raw amino-acid sequence, 160 residues long: S-protein homolog 13 (160 aa).

The signal sequence occupies residues 1–27; sequence MGRDLGWCFFVATVLLAAVLLPAPTIA.

It belongs to the plant self-incompatibility (S1) protein family.

It is found in the secreted. In Arabidopsis thaliana (Mouse-ear cress), this protein is S-protein homolog 13.